Consider the following 428-residue polypeptide: Enolase (428 aa).

Residue Q173 coordinates (2R)-2-phosphoglycerate. The active-site Proton donor is the E217. 3 residues coordinate Mg(2+): D253, E294, and D320. (2R)-2-phosphoglycerate-binding residues include K345, R374, S375, and K396. The active-site Proton acceptor is the K345.

The protein belongs to the enolase family. Mg(2+) serves as cofactor.

It localises to the cytoplasm. The protein localises to the secreted. It is found in the cell surface. The enzyme catalyses (2R)-2-phosphoglycerate = phosphoenolpyruvate + H2O. The protein operates within carbohydrate degradation; glycolysis; pyruvate from D-glyceraldehyde 3-phosphate: step 4/5. Its function is as follows. Catalyzes the reversible conversion of 2-phosphoglycerate (2-PG) into phosphoenolpyruvate (PEP). It is essential for the degradation of carbohydrates via glycolysis. This chain is Enolase, found in Methanosarcina barkeri (strain Fusaro / DSM 804).